The chain runs to 312 residues: MLIGVSGTKFCGCEDVINMLVDHFHFELLNHLDNPEEILDYATKNYTKNSVIFLEKLSLLEKLEKRPFFVHLSIDAPVTTRVALYRKTTQAESLSLEQIIQAIDQHDFQPEGIKLREKSHLRFKIVNEDRRGRRQSLINNITTQLKILDDKEKQMAPLMRPSWDSYFMKLATLAASRSNCMKRRVGCVIVRECRVIATGYNGTPRHLTNCFNGGCPRCNDGDSRNLHTCLCLHAEENALLEAGRDRVGQNATLYCDTCPCLTCSVKIVQTGISEVVYSQSYRMDEESFKVLKNAGITVRQFSFTEEPRIVMI.

A CMP/dCMP-type deaminase domain is found at 162-291 (SWDSYFMKLA…RMDEESFKVL (130 aa)). H233 is a binding site for Zn(2+). Catalysis depends on E235, which acts as the Proton donor. 2 residues coordinate Zn(2+): C260 and C263.

Belongs to the cytidine and deoxycytidylate deaminase family. The cofactor is Zn(2+).

It carries out the reaction dCMP + H2O + H(+) = dUMP + NH4(+). Allosteric enzyme whose activity is greatly influenced by the end products of its metabolic pathway, dCTP and dTTP. Catalyzes the hydrolytic deamination of dCMP to yield dUMP, the nucleotide substrate for thymidylate synthetase. The sequence is that of Deoxycytidylate deaminase from Saccharomyces cerevisiae (strain ATCC 204508 / S288c) (Baker's yeast).